Reading from the N-terminus, the 195-residue chain is Putative NADH dehydrogenase/NAD(P)H nitroreductase RSc1004 (195 aa).

Belongs to the nitroreductase family. HadB/RutE subfamily. FMN serves as cofactor.

The chain is Putative NADH dehydrogenase/NAD(P)H nitroreductase RSc1004 from Ralstonia nicotianae (strain ATCC BAA-1114 / GMI1000) (Ralstonia solanacearum).